The chain runs to 190 residues: Lipid A acyltransferase PagP (190 aa).

A signal peptide spans 1–18 (MKRLISCLTIICALNASA). Residues histidine 60, aspartate 103, and serine 104 contribute to the active site.

This sequence belongs to the lipid A palmitoyltransferase family. Homodimer.

It is found in the cell outer membrane. The enzyme catalyses a lipid A + a 1,2-diacyl-sn-glycero-3-phosphocholine = a hepta-acyl lipid A + a 2-acyl-sn-glycero-3-phosphocholine. It carries out the reaction a lipid IVA + a 1,2-diacyl-sn-glycero-3-phosphocholine = a lipid IVB + a 2-acyl-sn-glycero-3-phosphocholine. It catalyses the reaction a lipid IIA + a 1,2-diacyl-sn-glycero-3-phosphocholine = a lipid IIB + a 2-acyl-sn-glycero-3-phosphocholine. Its function is as follows. Transfers a fatty acid residue from the sn-1 position of a phospholipid to the N-linked hydroxyfatty acid chain on the proximal unit of lipid A or its precursors. This chain is Lipid A acyltransferase PagP, found in Legionella pneumophila (strain Paris).